Consider the following 436-residue polypeptide: Alpha-galactosidase mel1 (436 aa).

The first 24 residues, 1-24 (MISISFLNCFFLVFLFLFFSDVHG), serve as a signal peptide directing secretion. Residues C45 and C77 are joined by a disulfide bond. N84 is a glycosylation site (N-linked (GlcNAc...) asparagine). The cysteines at positions 126 and 156 are disulfide-linked. D154 functions as the Nucleophile in the catalytic mechanism. The N-linked (GlcNAc...) asparagine glycan is linked to N180. D214 (proton donor) is an active-site residue.

The protein belongs to the glycosyl hydrolase 27 family.

Its subcellular location is the endoplasmic reticulum lumen. It is found in the secreted. The catalysed reaction is Hydrolysis of terminal, non-reducing alpha-D-galactose residues in alpha-D-galactosides, including galactose oligosaccharides, galactomannans and galactolipids.. Its function is as follows. Secreted alpha-galactosidase required for catabolic conversion of melibiose to glucose and galactose. This Schizosaccharomyces pombe (strain 972 / ATCC 24843) (Fission yeast) protein is Alpha-galactosidase mel1 (mel1).